A 599-amino-acid chain; its full sequence is Elongation factor 4 (599 aa).

Residues 5–187 (SHIRNFSIIA…RLVHTIPAPV (183 aa)) form the tr-type G domain. Residues 17–22 (DHGKST) and 134–137 (NKMD) each bind GTP.

This sequence belongs to the TRAFAC class translation factor GTPase superfamily. Classic translation factor GTPase family. LepA subfamily.

It localises to the cell inner membrane. The enzyme catalyses GTP + H2O = GDP + phosphate + H(+). In terms of biological role, required for accurate and efficient protein synthesis under certain stress conditions. May act as a fidelity factor of the translation reaction, by catalyzing a one-codon backward translocation of tRNAs on improperly translocated ribosomes. Back-translocation proceeds from a post-translocation (POST) complex to a pre-translocation (PRE) complex, thus giving elongation factor G a second chance to translocate the tRNAs correctly. Binds to ribosomes in a GTP-dependent manner. This is Elongation factor 4 from Pseudomonas putida (strain W619).